A 206-amino-acid chain; its full sequence is Outer-membrane lipoprotein LolB (206 aa).

The N-terminal stretch at 1–18 is a signal peptide; the sequence is MSLLKNLLAPCLALLLAG. Residue Cys19 is the site of N-palmitoyl cysteine attachment. Residue Cys19 is the site of S-diacylglycerol cysteine attachment.

This sequence belongs to the LolB family. In terms of assembly, monomer.

The protein localises to the cell outer membrane. Its function is as follows. Plays a critical role in the incorporation of lipoproteins in the outer membrane after they are released by the LolA protein. The chain is Outer-membrane lipoprotein LolB from Stutzerimonas stutzeri (strain A1501) (Pseudomonas stutzeri).